The chain runs to 232 residues: Octanoyltransferase (232 aa).

A BPL/LPL catalytic domain is found at 44 to 219 (EHTADEVWVV…QLARQFGLVL (176 aa)). Residues 83–90 (RGGQVTYH), 150–152 (ALG), and 163–165 (GLS) each bind substrate. Cys-181 functions as the Acyl-thioester intermediate in the catalytic mechanism.

This sequence belongs to the LipB family.

It localises to the cytoplasm. The enzyme catalyses octanoyl-[ACP] + L-lysyl-[protein] = N(6)-octanoyl-L-lysyl-[protein] + holo-[ACP] + H(+). The protein operates within protein modification; protein lipoylation via endogenous pathway; protein N(6)-(lipoyl)lysine from octanoyl-[acyl-carrier-protein]: step 1/2. Catalyzes the transfer of endogenously produced octanoic acid from octanoyl-acyl-carrier-protein onto the lipoyl domains of lipoate-dependent enzymes. Lipoyl-ACP can also act as a substrate although octanoyl-ACP is likely to be the physiological substrate. The protein is Octanoyltransferase of Xanthomonas euvesicatoria pv. vesicatoria (strain 85-10) (Xanthomonas campestris pv. vesicatoria).